The primary structure comprises 457 residues: Exodeoxyribonuclease 7 large subunit (457 aa).

This sequence belongs to the XseA family. As to quaternary structure, heterooligomer composed of large and small subunits.

The protein resides in the cytoplasm. The enzyme catalyses Exonucleolytic cleavage in either 5'- to 3'- or 3'- to 5'-direction to yield nucleoside 5'-phosphates.. Bidirectionally degrades single-stranded DNA into large acid-insoluble oligonucleotides, which are then degraded further into small acid-soluble oligonucleotides. The sequence is that of Exodeoxyribonuclease 7 large subunit from Enterobacter sp. (strain 638).